The chain runs to 55 residues: Hirustasin (55 aa).

Cystine bridges form between Cys6/Cys17, Cys11/Cys22, Cys24/Cys44, Cys29/Cys48, and Cys33/Cys50. The Antistasin-like domain occupies 24 to 50 (CNEVHCRIRCKYGLKKDENGCEYPCSC).

Belongs to the protease inhibitor I15 (antistasin) family.

It is found in the secreted. Its function is as follows. Acts as an inhibitor of tissue kallikrein, trypsin, chymotrypsin and neutrophil cathepsin G. This Hirudo medicinalis (Medicinal leech) protein is Hirustasin.